The following is a 118-amino-acid chain: Acidic phospholipase A2 homolog (118 aa).

7 disulfide bridges follow: Cys-11/Cys-70, Cys-25/Cys-117, Cys-27/Cys-43, Cys-42/Cys-98, Cys-49/Cys-91, Cys-59/Cys-84, and Cys-77/Cys-89.

Belongs to the phospholipase A2 family. Group I subfamily. A49 sub-subfamily. In terms of tissue distribution, expressed by the venom gland.

The protein resides in the secreted. In terms of biological role, snake venom phospholipase A2 (PLA2) homolog that lacks both catalytic and neurotoxicity activities. In Bungarus fasciatus (Banded krait), this protein is Acidic phospholipase A2 homolog.